Reading from the N-terminus, the 247-residue chain is Pulmonary surfactant-associated protein A (247 aa).

A signal peptide spans 1–15 (MLLLSLALTLISAPA). The region spanning 27-99 (GSPGIPGTPG…PGERGPPGLP (73 aa)) is the Collagen-like domain. Pro29, Pro32, Pro35, Pro41, Pro53, Pro56, Pro62, Pro66, and Pro69 each carry 4-hydroxyproline. The interval 30-100 (GIPGTPGSHG…GERGPPGLPA (71 aa)) is disordered. Residues 41 to 50 (PGRDGRDGVK) are compositionally biased toward basic and acidic residues. Residues 53-64 (PGPPGPMGPPGG) are compositionally biased toward pro residues. Positions 83-92 (ERGDKGEPGE) are enriched in basic and acidic residues. The 116-residue stretch at 132–247 (AVGEKIFSTN…LQYRLVICEF (116 aa)) folds into the C-type lectin domain. 2 disulfide bridges follow: Cys154–Cys245 and Cys223–Cys237. N-linked (GlcNAc...) asparagine glycosylation occurs at Asn206. Glu214, Arg216, Asn233, and Asp234 together coordinate Ca(2+).

This sequence belongs to the SFTPA family. Oligomeric complex of 6 set of homotrimers.

It localises to the secreted. Its subcellular location is the extracellular space. The protein localises to the extracellular matrix. The protein resides in the surface film. Its function is as follows. In presence of calcium ions, it binds to surfactant phospholipids and contributes to lower the surface tension at the air-liquid interface in the alveoli of the mammalian lung and is essential for normal respiration. Enhances the expression of MYO18A/SP-R210 on alveolar macrophages. This is Pulmonary surfactant-associated protein A (SFTPA1) from Oryctolagus cuniculus (Rabbit).